Here is a 279-residue protein sequence, read N- to C-terminus: Acetyl-coenzyme A carboxylase carboxyl transferase subunit beta (279 aa).

The CoA carboxyltransferase N-terminal domain maps to 27 to 279 (LFLACPYCGT…IVKLHHRTEI (253 aa)). Zn(2+) is bound by residues cysteine 31, cysteine 34, cysteine 49, and cysteine 52. The C4-type zinc-finger motif lies at 31 to 52 (CPYCGTQMYNKQLGDYRVCAKC).

The protein belongs to the AccD/PCCB family. In terms of assembly, acetyl-CoA carboxylase is a heterohexamer composed of biotin carboxyl carrier protein (AccB), biotin carboxylase (AccC) and two subunits each of ACCase subunit alpha (AccA) and ACCase subunit beta (AccD). Zn(2+) serves as cofactor.

It is found in the cytoplasm. The catalysed reaction is N(6)-carboxybiotinyl-L-lysyl-[protein] + acetyl-CoA = N(6)-biotinyl-L-lysyl-[protein] + malonyl-CoA. The protein operates within lipid metabolism; malonyl-CoA biosynthesis; malonyl-CoA from acetyl-CoA: step 1/1. In terms of biological role, component of the acetyl coenzyme A carboxylase (ACC) complex. Biotin carboxylase (BC) catalyzes the carboxylation of biotin on its carrier protein (BCCP) and then the CO(2) group is transferred by the transcarboxylase to acetyl-CoA to form malonyl-CoA. This chain is Acetyl-coenzyme A carboxylase carboxyl transferase subunit beta, found in Leuconostoc citreum (strain KM20).